We begin with the raw amino-acid sequence, 404 residues long: MNKILKNIINKSSINNVFKTSFNGGISSSSSSSSSYLNNNNNIIKSYNVQQKQQQRYYSSFEDDLSPKKLKEKILENETEEIRDFVRSQRLTKKTASPLEGMNRKERRKMTTKLYRNPDNLIRGGIVSPQPLIPAHIKKPKYVLGEPVIDFEIDDPIEIHTAESIEHMRVVGKMAKEVLEYAGTLVRPGITTDEIDKLVHQNIIDRGAYPSPLGYKGFPKSICTSINEVLCHGIPDDRPLEFGDIVKIDVTLYYNGYHGDTCATFPVGEIDSSSKRLIEATEKALYAAIGEVKDGALFNKIGKKIQLVANKYSLSVTPEFTGHGIGQLFHTAPFVFQCANEFDSVMKEGMIFTIEPVLVESTSPYAEWKMWDDKWTVSSREGGWSAQFEHTILVTKDGYEILTK.

The transit peptide at 1-58 (MNKILKNIINKSSINNVFKTSFNGGISSSSSSSSSYLNNNNNIIKSYNVQQKQQQRYY) directs the protein to the mitochondrion. Positions 86–109 (VRSQRLTKKTASPLEGMNRKERRK) are disordered. H232 serves as a coordination point for substrate. A divalent metal cation contacts are provided by D249, D260, and H323. H330 provides a ligand contact to substrate. Positions 355 and 389 each coordinate a divalent metal cation.

Belongs to the peptidase M24A family. Methionine aminopeptidase type 1 subfamily. Co(2+) is required as a cofactor. Requires Zn(2+) as cofactor. Mn(2+) serves as cofactor. The cofactor is Fe(2+).

The protein localises to the mitochondrion. It carries out the reaction Release of N-terminal amino acids, preferentially methionine, from peptides and arylamides.. Its function is as follows. Removes the N-terminal methionine from nascent proteins. The N-terminal methionine is often cleaved when the second residue in the primary sequence is small and uncharged (Met-Ala-, Cys, Gly, Pro, Ser, Thr, or Val). The chain is Methionine aminopeptidase 1D, mitochondrial (metap1d) from Dictyostelium discoideum (Social amoeba).